Here is a 338-residue protein sequence, read N- to C-terminus: UPF0284 protein PAE0372 (338 aa).

The protein belongs to the UPF0284 family.

This Pyrobaculum aerophilum (strain ATCC 51768 / DSM 7523 / JCM 9630 / CIP 104966 / NBRC 100827 / IM2) protein is UPF0284 protein PAE0372.